Here is a 246-residue protein sequence, read N- to C-terminus: 3-deoxy-manno-octulosonate cytidylyltransferase (246 aa).

This sequence belongs to the KdsB family.

It localises to the cytoplasm. It carries out the reaction 3-deoxy-alpha-D-manno-oct-2-ulosonate + CTP = CMP-3-deoxy-beta-D-manno-octulosonate + diphosphate. It functions in the pathway nucleotide-sugar biosynthesis; CMP-3-deoxy-D-manno-octulosonate biosynthesis; CMP-3-deoxy-D-manno-octulosonate from 3-deoxy-D-manno-octulosonate and CTP: step 1/1. The protein operates within bacterial outer membrane biogenesis; lipopolysaccharide biosynthesis. In terms of biological role, activates KDO (a required 8-carbon sugar) for incorporation into bacterial lipopolysaccharide in Gram-negative bacteria. In Rickettsia felis (strain ATCC VR-1525 / URRWXCal2) (Rickettsia azadi), this protein is 3-deoxy-manno-octulosonate cytidylyltransferase.